The following is a 93-amino-acid chain: Protein S100-A8 (93 aa).

EF-hand domains lie at 12–47 and 46–81; these read IIDV…QYIR and IRKK…MGVA. Zn(2+)-binding residues include H17 and H27. Ca(2+) is bound at residue D33. C42 carries the post-translational modification S-nitrosocysteine. The Ca(2+) site is built by D59, N61, D63, and E70. The Zn(2+) site is built by H83 and H87.

The protein belongs to the S-100 family. Homodimer. Preferentially exists as a heterodimer or heterotetramer with S100A9 known as calprotectin (S100A8/A9). S100A8 interacts with AGER, ATP2A2 and with the heterodimeric complex formed by TLR4 and LY96. Interacts with GAPDH. Calprotectin (S100A8/9) interacts with CEACAM3 and tubulin filaments in a calcium-dependent manner. Heterotetrameric calprotectin (S100A8/A9) interacts with ANXA6 and associates with tubulin filaments in activated monocytes. S100A8 and calprotectin (S100A8/9) interact with NCF2/P67PHOX, RAC1 and RAC2. Calprotectin (S100A8/9) interacts with CYBA and CYBB. Calprotectin (S100A8/9) interacts with NOS2 to form the iNOS-S100A8/A9 transnitrosylase complex; induced by LDL(ox). Calprotectin (S100A8/9) interacts with CD69. In terms of tissue distribution, calprotectin (S100A8/9) is predominantly expressed in myeloid cells. Except for inflammatory conditions, the expression is restricted to a specific stage of myeloid differentiation since both proteins are expressed in circulating neutrophils and monocytes but are absent in normal tissue macrophages and lymphocytes. Under chronic inflammatory conditions, such as psoriasis and malignant disorders, also expressed in the epidermis. Found in high concentrations at local sites of inflammation or in the serum of patients with inflammatory diseases such as rheumatoid, cystic fibrosis, inflammatory bowel disease, Crohn's disease, giant cell arteritis, cystic fibrosis, Sjogren's syndrome, systemic lupus erythematosus, and progressive systemic sclerosis. Involved in the formation and deposition of amyloids in the aging prostate known as corpora amylacea inclusions. Strongly up-regulated in many tumors, including gastric, esophageal, colon, pancreatic, bladder, ovarian, thyroid, breast and skin cancers.

The protein localises to the secreted. It is found in the cytoplasm. Its subcellular location is the cytoskeleton. It localises to the cell membrane. Its activity is regulated as follows. Calprotectin (S100A8/A9) activity on TLR4 signaling is inhibited by paquinimod. S100A8 is a calcium- and zinc-binding protein which plays a prominent role in the regulation of inflammatory processes and immune response. It can induce neutrophil chemotaxis and adhesion. Predominantly found as calprotectin (S100A8/A9) which has a wide plethora of intra- and extracellular functions. The intracellular functions include: facilitating leukocyte arachidonic acid trafficking and metabolism, modulation of the tubulin-dependent cytoskeleton during migration of phagocytes and activation of the neutrophilic NADPH-oxidase. Also participates in regulatory T-cell differentiation together with CD69. Activates NADPH-oxidase by facilitating the enzyme complex assembly at the cell membrane, transferring arachidonic acid, an essential cofactor, to the enzyme complex and S100A8 contributes to the enzyme assembly by directly binding to NCF2/P67PHOX. The extracellular functions involve pro-inflammatory, antimicrobial, oxidant-scavenging and apoptosis-inducing activities. Its pro-inflammatory activity includes recruitment of leukocytes, promotion of cytokine and chemokine production, and regulation of leukocyte adhesion and migration. Acts as an alarmin or a danger associated molecular pattern (DAMP) molecule and stimulates innate immune cells via binding to pattern recognition receptors such as Toll-like receptor 4 (TLR4) and receptor for advanced glycation endproducts (AGER). Binding to TLR4 and AGER activates the MAP-kinase and NF-kappa-B signaling pathways resulting in the amplification of the pro-inflammatory cascade. Has antimicrobial activity towards bacteria and fungi and exerts its antimicrobial activity probably via chelation of Zn(2+) which is essential for microbial growth. Can induce cell death via autophagy and apoptosis and this occurs through the cross-talk of mitochondria and lysosomes via reactive oxygen species (ROS) and the process involves BNIP3. Can regulate neutrophil number and apoptosis by an anti-apoptotic effect; regulates cell survival via ITGAM/ITGB and TLR4 and a signaling mechanism involving MEK-ERK. Its role as an oxidant scavenger has a protective role in preventing exaggerated tissue damage by scavenging oxidants. Can act as a potent amplifier of inflammation in autoimmunity as well as in cancer development and tumor spread. The iNOS-S100A8/A9 transnitrosylase complex directs selective inflammatory stimulus-dependent S-nitrosylation of GAPDH and probably multiple targets such as ANXA5, EZR, MSN and VIM by recognizing a [IL]-x-C-x-x-[DE] motif; S100A8 seems to contribute to S-nitrosylation site selectivity. Its function is as follows. (Microbial infection) Upon infection by human coronavirus SARS-CoV-2, may induce expansion of aberrant immature neutrophils in a TLR4-dependent manner. This chain is Protein S100-A8, found in Homo sapiens (Human).